Consider the following 326-residue polypeptide: N-acetyl-gamma-glutamyl-phosphate reductase (326 aa).

The active site involves Cys155.

The protein belongs to the NAGSA dehydrogenase family. Type 1 subfamily.

It localises to the cytoplasm. It catalyses the reaction N-acetyl-L-glutamate 5-semialdehyde + phosphate + NADP(+) = N-acetyl-L-glutamyl 5-phosphate + NADPH + H(+). It functions in the pathway amino-acid biosynthesis; L-arginine biosynthesis; N(2)-acetyl-L-ornithine from L-glutamate: step 3/4. In terms of biological role, catalyzes the NADPH-dependent reduction of N-acetyl-5-glutamyl phosphate to yield N-acetyl-L-glutamate 5-semialdehyde. The chain is N-acetyl-gamma-glutamyl-phosphate reductase from Shewanella baltica (strain OS185).